The sequence spans 212 residues: Thymidylate kinase (212 aa).

Position 10–17 (Gly-10–Thr-17) interacts with ATP.

This sequence belongs to the thymidylate kinase family.

The enzyme catalyses dTMP + ATP = dTDP + ADP. Phosphorylation of dTMP to form dTDP in both de novo and salvage pathways of dTTP synthesis. In Lactobacillus delbrueckii subsp. bulgaricus (strain ATCC 11842 / DSM 20081 / BCRC 10696 / JCM 1002 / NBRC 13953 / NCIMB 11778 / NCTC 12712 / WDCM 00102 / Lb 14), this protein is Thymidylate kinase.